Consider the following 283-residue polypeptide: Mau operon transcriptional activator (283 aa).

One can recognise an HTH lysR-type domain in the interval 1-58; sequence MNWDDLRVVAAINRCGSFNRAAKMLNVEETTIARRLARLEGSLGCVLFQAVDGQRRPT. Positions 18–37 form a DNA-binding region, H-T-H motif; it reads FNRAAKMLNVEETTIARRLA.

The protein belongs to the LysR transcriptional regulatory family.

Functionally, transcriptional activator of the mau genes involved in methylamine metabolism. The protein is Mau operon transcriptional activator (mauR) of Paracoccus denitrificans.